Reading from the N-terminus, the 92-residue chain is Small ribosomal subunit protein uS19c (92 aa).

Belongs to the universal ribosomal protein uS19 family.

It is found in the plastid. It localises to the chloroplast. Its function is as follows. Protein S19 forms a complex with S13 that binds strongly to the 16S ribosomal RNA. The polypeptide is Small ribosomal subunit protein uS19c (Fagopyrum esculentum subsp. ancestrale (Wild buckwheat)).